Consider the following 121-residue polypeptide: MAKKKKTVASNGIAHIHATSNNSIITITDINGNAITWSSSGAIGYKGAKKKTPYSAGVAAEKAAKEAMAMGLSTIKIYVNGVGRGKETAIRSLAACGLTITEIHDVTPIPHNGCRPPKKPR.

The protein belongs to the universal ribosomal protein uS11 family. In terms of assembly, part of the 30S ribosomal subunit. Interacts with proteins S7 and S18. Binds to IF-3.

Its function is as follows. Located on the platform of the 30S subunit, it bridges several disparate RNA helices of the 16S rRNA. Forms part of the Shine-Dalgarno cleft in the 70S ribosome. The sequence is that of Small ribosomal subunit protein uS11 from Mycoplasmoides gallisepticum (strain R(low / passage 15 / clone 2)) (Mycoplasma gallisepticum).